Consider the following 93-residue polypeptide: Large ribosomal subunit protein uL23cy (93 aa).

The protein belongs to the universal ribosomal protein uL23 family. In terms of assembly, part of the 50S ribosomal subunit.

The protein localises to the plastid. It localises to the chloroplast. Its function is as follows. Binds to 23S rRNA. The protein is Large ribosomal subunit protein uL23cy (rpl23-B) of Sorghum bicolor (Sorghum).